A 1283-amino-acid chain; its full sequence is uncharacterized protein (1283 aa).

Residues 10-46 (ACPPNTFTCADGSCIPSDWKGDGEKDCEDGSDEEAVT) form the LDL-receptor class A domain. Cystine bridges form between Cys11–Cys23 and Cys18–Cys36. Residues 27 to 47 (DWKGDGEKDCEDGSDEEAVTG) form a disordered region. A compositionally biased stretch (acidic residues) spans 34–45 (KDCEDGSDEEAV). N-linked (GlcNAc...) asparagine glycosylation occurs at Asn79. The disordered stretch occupies residues 236–278 (STTLIVDETTESTSASAEDDDDDVLTTNTSEESTATTAHDEEV). Positions 261-272 (TTNTSEESTATT) are enriched in low complexity. Residues 332-389 (YQKTLEKEKCAIRNATSKCEALISYNNNLDCAIVTMNDECEVDAQNLVVELQEEVNDL) are a coiled coil. 2 disordered regions span residues 621-651 (ARPT…VASS) and 1005-1046 (SSST…PTDG). A compositionally biased stretch (pro residues) spans 626 to 647 (VTMPPRAPTAKPLPIPSAPTPP). Residues 1005-1015 (SSSTMVSTSSE) show a composition bias toward low complexity. A compositionally biased stretch (acidic residues) spans 1016 to 1026 (SDSESAPEQET). The span at 1027-1044 (EPTVPSTTETTESPSTPT) shows a compositional bias: low complexity. The chain crosses the membrane as a helical span at residues 1263–1283 (VQSSVSFHIILAALIPFFALF).

Its subcellular location is the membrane. This is an uncharacterized protein from Caenorhabditis elegans.